A 329-amino-acid polypeptide reads, in one-letter code: Epoxide hydrolase (329 aa).

The AB hydrolase-1 domain maps to 35–308 (PAVLFCHGFP…DNVGHWVQHE (274 aa)). Residue Asp111 is the Nucleophile of the active site. The active-site Proton donor is the Tyr242. Catalysis depends on His303, which acts as the Proton acceptor.

Belongs to the AB hydrolase superfamily. Epoxide hydrolase family. Homodimer.

It catalyses the reaction an epoxide + H2O = an ethanediol. The enzyme catalyses (R)-styrene oxide + H2O = (R)-styrene glycol. The catalysed reaction is (S)-styrene oxide + H2O = (S)-styrene glycol. It carries out the reaction 3,4-epoxy-1-cyclohexene + H2O = cyclohex-3-ene-1,2-diol. Functionally, catalyzes the hydrolysis of various epoxides into diols. In vitro, shows the strongest activity toward aromatic and cyclic aliphatic epoxide compounds, since it shows strong activity toward (R)-styrene oxide, (S)-styrene oxide, and 3,4-epoxy-1-cyclohexene, but very weak activity toward (R)-epichlorohydrin, (S)-epichlorohydrin, and 1,2-epoxy-9-decene. The protein is Epoxide hydrolase of Caballeronia sordidicola (Burkholderia sordidicola).